The following is a 189-amino-acid chain: Large ribosomal subunit protein bL9 (189 aa).

This sequence belongs to the bacterial ribosomal protein bL9 family.

Its function is as follows. Binds to the 23S rRNA. In Brucella melitensis biotype 2 (strain ATCC 23457), this protein is Large ribosomal subunit protein bL9.